The following is a 371-amino-acid chain: tRNA-specific 2-thiouridylase MnmA (371 aa).

ATP-binding positions include 9–16 and methionine 35; that span reads AMSGGVDS. Catalysis depends on cysteine 109, which acts as the Nucleophile. A disulfide bond links cysteine 109 and cysteine 207. Glycine 133 contributes to the ATP binding site. Residues 157 to 159 form an interaction with tRNA region; that stretch reads KDQ. Cysteine 207 acts as the Cysteine persulfide intermediate in catalysis.

It belongs to the MnmA/TRMU family.

The protein resides in the cytoplasm. The catalysed reaction is S-sulfanyl-L-cysteinyl-[protein] + uridine(34) in tRNA + AH2 + ATP = 2-thiouridine(34) in tRNA + L-cysteinyl-[protein] + A + AMP + diphosphate + H(+). Its function is as follows. Catalyzes the 2-thiolation of uridine at the wobble position (U34) of tRNA, leading to the formation of s(2)U34. In Solibacter usitatus (strain Ellin6076), this protein is tRNA-specific 2-thiouridylase MnmA.